We begin with the raw amino-acid sequence, 62 residues long: Large ribosomal subunit protein bL28 (62 aa).

It belongs to the bacterial ribosomal protein bL28 family.

In Streptococcus gordonii (strain Challis / ATCC 35105 / BCRC 15272 / CH1 / DL1 / V288), this protein is Large ribosomal subunit protein bL28.